A 526-amino-acid polypeptide reads, in one-letter code: Probable metalloreductase AIM14 (526 aa).

7 helical membrane-spanning segments follow: residues 17–37, 60–80, 96–113, 138–158, 172–192, 199–219, and 221–241; these read IPYG…LGVL, LYLV…LLPF, RLGR…LLNL, CIII…ALGE, LAGV…IGPM, AFYV…AFHA, and PSVT…QGFA. In terms of domain architecture, Ferric oxidoreductase spans 97–214; it reads LGRLSYALLP…NLTGISFIFV (118 aa). Positions 238-370 constitute an FAD-binding FR-type domain; it reads QGFAKFYYAK…GGSGISFGLP (133 aa).

Belongs to the ferric reductase (FRE) family. AIM14 subfamily.

The protein resides in the membrane. In terms of biological role, probable cell surface metalloreductase. May be involved in iron or copper homeostasis. The protein is Probable metalloreductase AIM14 (AIM14) of Zygosaccharomyces rouxii (strain ATCC 2623 / CBS 732 / NBRC 1130 / NCYC 568 / NRRL Y-229).